Here is a 396-residue protein sequence, read N- to C-terminus: Elongation factor Tu 2 (396 aa).

The 197-residue stretch at 10–206 (KPHVNIGTIG…AVDEYIPTPE (197 aa)) folds into the tr-type G domain. The segment at 19-26 (GHVDHGKT) is G1. Position 19-26 (19-26 (GHVDHGKT)) interacts with GTP. A Mg(2+)-binding site is contributed by T26. Residues 60 to 64 (GITIN) are G2. A G3 region spans residues 81–84 (DCPG). Residues 81–85 (DCPGH) and 136–139 (NKVD) each bind GTP. Residues 136–139 (NKVD) form a G4 region. A G5 region spans residues 174-176 (SAL).

This sequence belongs to the TRAFAC class translation factor GTPase superfamily. Classic translation factor GTPase family. EF-Tu/EF-1A subfamily. Monomer.

It localises to the cytoplasm. It catalyses the reaction GTP + H2O = GDP + phosphate + H(+). GTP hydrolase that promotes the GTP-dependent binding of aminoacyl-tRNA to the A-site of ribosomes during protein biosynthesis. This is Elongation factor Tu 2 from Hyphomonas neptunium (strain ATCC 15444).